We begin with the raw amino-acid sequence, 427 residues long: 3-phosphoshikimate 1-carboxyvinyltransferase (427 aa).

Residues K22, S23, and R27 each contribute to the 3-phosphoshikimate site. K22 serves as a coordination point for phosphoenolpyruvate. The phosphoenolpyruvate site is built by G96 and R124. 7 residues coordinate 3-phosphoshikimate: S169, S170, Q171, S197, D313, N336, and K340. Residue Q171 coordinates phosphoenolpyruvate. The active-site Proton acceptor is the D313. Residues R344, R386, and K411 each contribute to the phosphoenolpyruvate site.

Belongs to the EPSP synthase family. As to quaternary structure, monomer.

The protein resides in the cytoplasm. It carries out the reaction 3-phosphoshikimate + phosphoenolpyruvate = 5-O-(1-carboxyvinyl)-3-phosphoshikimate + phosphate. It functions in the pathway metabolic intermediate biosynthesis; chorismate biosynthesis; chorismate from D-erythrose 4-phosphate and phosphoenolpyruvate: step 6/7. In terms of biological role, catalyzes the transfer of the enolpyruvyl moiety of phosphoenolpyruvate (PEP) to the 5-hydroxyl of shikimate-3-phosphate (S3P) to produce enolpyruvyl shikimate-3-phosphate and inorganic phosphate. The chain is 3-phosphoshikimate 1-carboxyvinyltransferase from Klebsiella pneumoniae (strain 342).